A 423-amino-acid polypeptide reads, in one-letter code: Mannose-6-phosphate isomerase (423 aa).

A2 carries the post-translational modification N-acetylalanine. Phosphoserine is present on residues S102 and S108. Q110, H112, E137, and H276 together coordinate Zn(2+). The active site involves R295.

Belongs to the mannose-6-phosphate isomerase type 1 family. Zn(2+) serves as cofactor. In terms of tissue distribution, expressed in all tissues, but more abundant in heart, brain and skeletal muscle.

The protein localises to the cytoplasm. It catalyses the reaction D-mannose 6-phosphate = D-fructose 6-phosphate. The protein operates within nucleotide-sugar biosynthesis; GDP-alpha-D-mannose biosynthesis; alpha-D-mannose 1-phosphate from D-fructose 6-phosphate: step 1/2. Isomerase that catalyzes the interconversion of fructose-6-P and mannose-6-P and has a critical role in the supply of D-mannose derivatives required for many eukaryotic glycosylation reactions. This is Mannose-6-phosphate isomerase from Homo sapiens (Human).